The following is a 250-amino-acid chain: Eukaryotic translation initiation factor 3 subunit K (250 aa).

The 184-residue stretch at F46–K229 folds into the PCI domain.

This sequence belongs to the eIF-3 subunit K family. In terms of assembly, component of the eukaryotic translation initiation factor 3 (eIF-3) complex.

The protein localises to the cytoplasm. Its function is as follows. Component of the eukaryotic translation initiation factor 3 (eIF-3) complex, which is involved in protein synthesis of a specialized repertoire of mRNAs and, together with other initiation factors, stimulates binding of mRNA and methionyl-tRNAi to the 40S ribosome. The eIF-3 complex specifically targets and initiates translation of a subset of mRNAs involved in cell proliferation. The chain is Eukaryotic translation initiation factor 3 subunit K from Emericella nidulans (strain FGSC A4 / ATCC 38163 / CBS 112.46 / NRRL 194 / M139) (Aspergillus nidulans).